The primary structure comprises 157 residues: 2-C-methyl-D-erythritol 2,4-cyclodiphosphate synthase (157 aa).

A divalent metal cation-binding residues include D8 and H10. Residues 8–10 (DIH) and 35–36 (HS) each bind 4-CDP-2-C-methyl-D-erythritol 2-phosphate. H43 is an a divalent metal cation binding site. 4-CDP-2-C-methyl-D-erythritol 2-phosphate-binding positions include 57–59 (DIG), 62–66 (FPNND), and K142.

The protein belongs to the IspF family. In terms of assembly, homotrimer. It depends on a divalent metal cation as a cofactor.

It carries out the reaction 4-CDP-2-C-methyl-D-erythritol 2-phosphate = 2-C-methyl-D-erythritol 2,4-cyclic diphosphate + CMP. The protein operates within isoprenoid biosynthesis; isopentenyl diphosphate biosynthesis via DXP pathway; isopentenyl diphosphate from 1-deoxy-D-xylulose 5-phosphate: step 4/6. In terms of biological role, involved in the biosynthesis of isopentenyl diphosphate (IPP) and dimethylallyl diphosphate (DMAPP), two major building blocks of isoprenoid compounds. Catalyzes the conversion of 4-diphosphocytidyl-2-C-methyl-D-erythritol 2-phosphate (CDP-ME2P) to 2-C-methyl-D-erythritol 2,4-cyclodiphosphate (ME-CPP) with a corresponding release of cytidine 5-monophosphate (CMP). The chain is 2-C-methyl-D-erythritol 2,4-cyclodiphosphate synthase from Wigglesworthia glossinidia brevipalpis.